Reading from the N-terminus, the 110-residue chain is Large ribosomal subunit protein uL22 (110 aa).

The protein belongs to the universal ribosomal protein uL22 family. In terms of assembly, part of the 50S ribosomal subunit.

Functionally, this protein binds specifically to 23S rRNA; its binding is stimulated by other ribosomal proteins, e.g. L4, L17, and L20. It is important during the early stages of 50S assembly. It makes multiple contacts with different domains of the 23S rRNA in the assembled 50S subunit and ribosome. In terms of biological role, the globular domain of the protein is located near the polypeptide exit tunnel on the outside of the subunit, while an extended beta-hairpin is found that lines the wall of the exit tunnel in the center of the 70S ribosome. This Colwellia psychrerythraea (strain 34H / ATCC BAA-681) (Vibrio psychroerythus) protein is Large ribosomal subunit protein uL22.